The chain runs to 296 residues: Peptide transport system permease protein SapC (296 aa).

The Cytoplasmic portion of the chain corresponds to 1–28; the sequence is MPYDSVYSEKRPPGTLRTAWRKFYSDAP. A helical membrane pass occupies residues 29–49; that stretch reads AMVGLYGCAGLALLCIFGGWI. Over 50–98 the chain is Periplasmic; that stretch reads APYGIDQQFLGYQLLPPSWSRYGEVSFFLGTDDLGRDVLSRLLSGAAPT. Residues 99 to 119 form a helical membrane-spanning segment; sequence VGGAFIVTLAATLCGLVLGVV. An ABC transmembrane type-1 domain is found at 99–284; sequence VGGAFIVTLA…LSVLLVNLLG (186 aa). Over 120–133 the chain is Cytoplasmic; sequence AGATHGLRSAVLNH. Residues 134–154 form a helical membrane-spanning segment; that stretch reads ILDTLLSIPSLLLAIIVVAFA. At 155-196 the chain is on the periplasmic side; it reads GPHLSHAMFAVWLALLPRMVRSVYSMVHDELEKEYVIAARLD. The chain crosses the membrane as a helical span at residues 197–217; the sequence is GATTLNILWFAILPNITAGLV. The Cytoplasmic segment spans residues 218-222; that stretch reads TEITR. The chain crosses the membrane as a helical span at residues 223 to 243; it reads ALSMAILDIAALGFLDLGAQL. At 244 to 257 the chain is on the periplasmic side; sequence PSPEWGAMLGDALE. Residues 258-278 traverse the membrane as a helical segment; that stretch reads LIYVAPWTVMLPGAAITLSVL. The Cytoplasmic segment spans residues 279–296; sequence LVNLLGDGIRRAIIAGVE.

Belongs to the binding-protein-dependent transport system permease family. OppBC subfamily.

It is found in the cell inner membrane. Its function is as follows. Involved in a peptide intake transport system that plays a role in the resistance to antimicrobial peptides. The sequence is that of Peptide transport system permease protein SapC (sapC) from Salmonella typhi.